The sequence spans 176 residues: Large ribosomal subunit protein uL6 (176 aa).

It belongs to the universal ribosomal protein uL6 family. As to quaternary structure, part of the 50S ribosomal subunit.

Functionally, this protein binds to the 23S rRNA, and is important in its secondary structure. It is located near the subunit interface in the base of the L7/L12 stalk, and near the tRNA binding site of the peptidyltransferase center. The chain is Large ribosomal subunit protein uL6 from Methanothrix thermoacetophila (strain DSM 6194 / JCM 14653 / NBRC 101360 / PT) (Methanosaeta thermophila).